A 183-amino-acid chain; its full sequence is Adenine phosphoribosyltransferase (183 aa).

The protein belongs to the purine/pyrimidine phosphoribosyltransferase family. Homodimer.

The protein localises to the cytoplasm. The enzyme catalyses AMP + diphosphate = 5-phospho-alpha-D-ribose 1-diphosphate + adenine. It functions in the pathway purine metabolism; AMP biosynthesis via salvage pathway; AMP from adenine: step 1/1. Functionally, catalyzes a salvage reaction resulting in the formation of AMP, that is energically less costly than de novo synthesis. This Sodalis glossinidius (strain morsitans) protein is Adenine phosphoribosyltransferase.